We begin with the raw amino-acid sequence, 194 residues long: Probable GTP-binding protein EngB (194 aa).

Residues 22–194 (GKPEIALVGR…SVWEWITAHM (173 aa)) form the EngB-type G domain. GTP is bound by residues 30-37 (GRSNVGKS), 57-61 (GKTQT), 75-78 (DVPG), 142-145 (TKSD), and 175-177 (FSS). Mg(2+) contacts are provided by Ser37 and Thr59.

The protein belongs to the TRAFAC class TrmE-Era-EngA-EngB-Septin-like GTPase superfamily. EngB GTPase family. The cofactor is Mg(2+).

Necessary for normal cell division and for the maintenance of normal septation. The sequence is that of Probable GTP-binding protein EngB from Leuconostoc citreum (strain KM20).